A 300-amino-acid chain; its full sequence is Epimerase family protein SAB0724c (300 aa).

The protein belongs to the NAD(P)-dependent epimerase/dehydratase family. SDR39U1 subfamily.

The sequence is that of Epimerase family protein SAB0724c from Staphylococcus aureus (strain bovine RF122 / ET3-1).